The chain runs to 348 residues: Sulfate/thiosulfate import ATP-binding protein CysA (348 aa).

In terms of domain architecture, ABC transporter spans 3–237 (IRIQELRKQF…PSSPFVYSFV (235 aa)). 35-42 (GPSGSGKT) contributes to the ATP binding site.

Belongs to the ABC transporter superfamily. Sulfate/tungstate importer (TC 3.A.1.6) family. In terms of assembly, the complex is composed of two ATP-binding proteins (CysA), two transmembrane proteins (CysT and CysW) and a solute-binding protein (CysP).

It localises to the cell inner membrane. The enzyme catalyses sulfate(out) + ATP + H2O = sulfate(in) + ADP + phosphate + H(+). The catalysed reaction is thiosulfate(out) + ATP + H2O = thiosulfate(in) + ADP + phosphate + H(+). Its function is as follows. Part of the ABC transporter complex CysAWTP involved in sulfate/thiosulfate import. Responsible for energy coupling to the transport system. The chain is Sulfate/thiosulfate import ATP-binding protein CysA from Xylella fastidiosa (strain Temecula1 / ATCC 700964).